The primary structure comprises 456 residues: tRNA-2-methylthio-N(6)-dimethylallyladenosine synthase (456 aa).

In terms of domain architecture, MTTase N-terminal spans 3–120; it reads KKVYVKTFGC…LPQMIDQRRA (118 aa). [4Fe-4S] cluster-binding residues include cysteine 12, cysteine 49, cysteine 83, cysteine 157, cysteine 161, and cysteine 164. Residues 143 to 377 form the Radical SAM core domain; sequence RIDGPSAFVS…QATIEENVQR (235 aa). The region spanning 380–447 is the TRAM domain; it reads QAMVGKVERI…PHSLRGELVM (68 aa).

It belongs to the methylthiotransferase family. MiaB subfamily. As to quaternary structure, monomer. [4Fe-4S] cluster serves as cofactor.

It localises to the cytoplasm. The enzyme catalyses N(6)-dimethylallyladenosine(37) in tRNA + (sulfur carrier)-SH + AH2 + 2 S-adenosyl-L-methionine = 2-methylsulfanyl-N(6)-dimethylallyladenosine(37) in tRNA + (sulfur carrier)-H + 5'-deoxyadenosine + L-methionine + A + S-adenosyl-L-homocysteine + 2 H(+). Functionally, catalyzes the methylthiolation of N6-(dimethylallyl)adenosine (i(6)A), leading to the formation of 2-methylthio-N6-(dimethylallyl)adenosine (ms(2)i(6)A) at position 37 in tRNAs that read codons beginning with uridine. The protein is tRNA-2-methylthio-N(6)-dimethylallyladenosine synthase of Paraburkholderia phymatum (strain DSM 17167 / CIP 108236 / LMG 21445 / STM815) (Burkholderia phymatum).